We begin with the raw amino-acid sequence, 413 residues long: Cell surface GPI-anchored protein ECM33 (413 aa).

The N-terminal stretch at 1–20 (MQIKSFLLPIVAALLTSVSA) is a signal peptide. N-linked (GlcNAc...) asparagine glycosylation is found at Asn-93, Asn-102, Asn-172, Asn-209, Asn-222, Asn-227, Asn-279, Asn-290, Asn-306, Asn-322, and Asn-382. The tract at residues 347 to 390 (YVCTHPANPSSSSKSGSSTQTGKSDSKSSDGSSSSNSSSSSKKG) is disordered. Residues 356 to 390 (SSSSKSGSSTQTGKSDSKSSDGSSSSNSSSSSKKG) show a composition bias toward low complexity. Gly-390 carries GPI-anchor amidated glycine lipidation. The propeptide at 391–413 (ASNVLVVPGMVLTTALGVLLALI) is removed in mature form.

Belongs to the SPS2 family.

Its subcellular location is the cell membrane. The protein localises to the secreted. The protein resides in the cell wall. Cell surface protein required for proper cell wall integrity and for the correct assembly of the mannoprotein outer layer of the cell wall. The sequence is that of Cell surface GPI-anchored protein ECM33 (ECM331) from Candida albicans (strain SC5314 / ATCC MYA-2876) (Yeast).